We begin with the raw amino-acid sequence, 408 residues long: Probable E3 ubiquitin-protein ligase makorin-1 (408 aa).

2 consecutive C3H1-type zinc fingers follow at residues 34–61 and 63–90; these read WTRHVTCRYFIHGVCKEGINCRYSHDLA and SRSAMICRYFQRGCCAYGDRCRYEHNKP. 2 disordered regions span residues 90–114 and 154–173; these read PLQEDPTGDTCTAPSESLPEPSGNI and EAYTQGTVKPDEGREEPADP. A compositionally biased stretch (basic and acidic residues) spans 162-173; it reads KPDEGREEPADP. The C3H1-type 3 zinc finger occupies 174–201; the sequence is ELKKQLCPYAAMGECRYGENCVYLHGDP. The makorin-type Cys-His stretch occupies residues 202-229; it reads CDMCGLQVLHPVDTCQRSQHIKSCIEAH. The RING-type zinc finger occupies 247-301; that stretch reads CGICMEVVYEKTNPSERRFGILSNCSHSYCLKCIRKWRSAKQFESKIIKSCPECR. The segment at 330–359 adopts a C3H1-type 4 zinc-finger fold; sequence AMSSKSCRYFDEGRGTCPFGGNCFYRHAYP. The tract at residues 363 to 408 is disordered; sequence IEEPQPRQKSGMSSRYRIPSPSAGIDFGSLTSERAETRLRTRKTKL.

The catalysed reaction is S-ubiquitinyl-[E2 ubiquitin-conjugating enzyme]-L-cysteine + [acceptor protein]-L-lysine = [E2 ubiquitin-conjugating enzyme]-L-cysteine + N(6)-ubiquitinyl-[acceptor protein]-L-lysine.. It functions in the pathway protein modification; protein ubiquitination. In terms of biological role, E3 ubiquitin ligase catalyzing the covalent attachment of ubiquitin moieties onto substrate proteins. In Xenopus laevis (African clawed frog), this protein is Probable E3 ubiquitin-protein ligase makorin-1 (mkrn1).